A 248-amino-acid polypeptide reads, in one-letter code: Probable transcriptional regulatory protein Noc_0137 (248 aa).

Belongs to the TACO1 family.

It is found in the cytoplasm. The sequence is that of Probable transcriptional regulatory protein Noc_0137 from Nitrosococcus oceani (strain ATCC 19707 / BCRC 17464 / JCM 30415 / NCIMB 11848 / C-107).